The primary structure comprises 25 residues: Small ribosomal subunit protein eS32A (25 aa).

The disordered stretch occupies residues 1–25 (MRDKWRKKRVRRLKRKRRKMRARSK).

It belongs to the eukaryotic ribosomal protein eS32 family. Component of the large ribosomal subunit (LSU). Mature yeast ribosomes consist of a small (40S) and a large (60S) subunit. The 40S small subunit contains 1 molecule of ribosomal RNA (18S rRNA) and at least 33 different proteins. The large 60S subunit contains 3 rRNA molecules (25S, 5.8S and 5S rRNA) and at least 46 different proteins.

It is found in the cytoplasm. The protein resides in the nucleus. Its function is as follows. Component of the ribosome, a large ribonucleoprotein complex responsible for the synthesis of proteins in the cell. The small ribosomal subunit (SSU) binds messenger RNAs (mRNAs) and translates the encoded message by selecting cognate aminoacyl-transfer RNA (tRNA) molecules. The large subunit (LSU) contains the ribosomal catalytic site termed the peptidyl transferase center (PTC), which catalyzes the formation of peptide bonds, thereby polymerizing the amino acids delivered by tRNAs into a polypeptide chain. The nascent polypeptides leave the ribosome through a tunnel in the LSU and interact with protein factors that function in enzymatic processing, targeting, and the membrane insertion of nascent chains at the exit of the ribosomal tunnel. The polypeptide is Small ribosomal subunit protein eS32A (rpl4101) (Schizosaccharomyces pombe (strain 972 / ATCC 24843) (Fission yeast)).